Reading from the N-terminus, the 107-residue chain is Subtilisin inhibitor-like protein 3 (107 aa).

Cystine bridges form between C29/C44 and C65/C95.

It belongs to the protease inhibitor I16 (SSI) family. In terms of assembly, homodimer.

It localises to the secreted. In terms of biological role, inhibitor of subtilisin BPN' and trypsin. The chain is Subtilisin inhibitor-like protein 3 from Streptomyces coelicolor.